We begin with the raw amino-acid sequence, 106 residues long: Urease subunit beta (106 aa).

This sequence belongs to the urease beta subunit family. Heterotrimer of UreA (gamma), UreB (beta) and UreC (alpha) subunits. Three heterotrimers associate to form the active enzyme.

Its subcellular location is the cytoplasm. The catalysed reaction is urea + 2 H2O + H(+) = hydrogencarbonate + 2 NH4(+). It participates in nitrogen metabolism; urea degradation; CO(2) and NH(3) from urea (urease route): step 1/1. This is Urease subunit beta from Prochlorococcus marinus subsp. pastoris (strain CCMP1986 / NIES-2087 / MED4).